A 125-amino-acid chain; its full sequence is UPF0102 protein ABO_0585 (125 aa).

It belongs to the UPF0102 family.

The chain is UPF0102 protein ABO_0585 from Alcanivorax borkumensis (strain ATCC 700651 / DSM 11573 / NCIMB 13689 / SK2).